The sequence spans 321 residues: S-methyl-5'-thioadenosine phosphorylase (321 aa).

Phosphate is bound by residues threonine 30, 73-74, and 106-107; these read RH and SA. Position 215 (methionine 215) interacts with substrate. Phosphate is bound at residue serine 216. Substrate is bound at residue 239–241; it reads DYD.

It belongs to the PNP/MTAP phosphorylase family. MTAP subfamily. In terms of assembly, homotrimer.

The protein localises to the cytoplasm. Its subcellular location is the nucleus. The catalysed reaction is S-methyl-5'-thioadenosine + phosphate = 5-(methylsulfanyl)-alpha-D-ribose 1-phosphate + adenine. It functions in the pathway amino-acid biosynthesis; L-methionine biosynthesis via salvage pathway; S-methyl-5-thio-alpha-D-ribose 1-phosphate from S-methyl-5'-thioadenosine (phosphorylase route): step 1/1. Functionally, catalyzes the reversible phosphorylation of S-methyl-5'-thioadenosine (MTA) to adenine and 5-methylthioribose-1-phosphate. Involved in the breakdown of MTA, a major by-product of polyamine biosynthesis. Responsible for the first step in the methionine salvage pathway after MTA has been generated from S-adenosylmethionine. Has broad substrate specificity with 6-aminopurine nucleosides as preferred substrates. The sequence is that of S-methyl-5'-thioadenosine phosphorylase from Yarrowia lipolytica (strain CLIB 122 / E 150) (Yeast).